A 337-amino-acid chain; its full sequence is Eukaryotic translation initiation factor 3 subunit H (337 aa).

The region spanning 21–153 (VQCDGLAVMK…LKAYRLTPQA (133 aa)) is the MPN domain.

It belongs to the eIF-3 subunit H family. As to quaternary structure, component of the eukaryotic translation initiation factor 3 (eIF-3) complex. The eIF-3 complex interacts with pix. Interacts with mxt.

The protein localises to the cytoplasm. Component of the eukaryotic translation initiation factor 3 (eIF-3) complex, which is involved in protein synthesis of a specialized repertoire of mRNAs and, together with other initiation factors, stimulates binding of mRNA and methionyl-tRNAi to the 40S ribosome. The eIF-3 complex specifically targets and initiates translation of a subset of mRNAs involved in cell proliferation. The chain is Eukaryotic translation initiation factor 3 subunit H from Drosophila ananassae (Fruit fly).